Reading from the N-terminus, the 285-residue chain is Probable endonuclease 4 (285 aa).

The Zn(2+) site is built by His69, His109, Glu145, Asp179, His182, His216, Asp229, His231, and Glu261.

The protein belongs to the AP endonuclease 2 family. The cofactor is Zn(2+).

It catalyses the reaction Endonucleolytic cleavage to 5'-phosphooligonucleotide end-products.. Endonuclease IV plays a role in DNA repair. It cleaves phosphodiester bonds at apurinic or apyrimidinic (AP) sites, generating a 3'-hydroxyl group and a 5'-terminal sugar phosphate. The sequence is that of Probable endonuclease 4 from Enterobacter sp. (strain 638).